Here is a 1093-residue protein sequence, read N- to C-terminus: Protein AF-17 (1093 aa).

The PHD-type 1 zinc finger occupies 5-57 (VGGCCVCSDERGWAENPLVYCDGHACSVAVHQACYGIVQVPTGPWFCRKCESQ). The C2HC pre-PHD-type zinc finger occupies 62 to 95 (RVRCELCPHKDGALKRTDNGGWAHVVCALYIPEV). Residues 118 to 181 (KTCYICEEQG…KYCGYCKYHF (64 aa)) form a PHD-type 2 zinc finger. The disordered stretch occupies residues 185 to 500 (KTSRHSSGGG…GGPAAPSLPS (316 aa)). Gly residues predominate over residues 191–212 (SGGGGGGAGGGGGSMGGGGSGF). Positions 231–255 (PTHHERGQKKSRKDKERLKQKHKKR) are enriched in basic residues. The residue at position 258 (Ser-258) is a Phosphoserine. The span at 258–268 (SPPSILTPPVV) shows a compositional bias: pro residues. Over residues 282–300 (SHHEASTQETSESSRESKG) the composition is skewed to basic and acidic residues. Residues 301–316 (KKSSSHSLSHKGKKLS) are compositionally biased toward basic residues. Positions 317–340 (SGKGVSSFTSASSSSSSSSSSSGG) are enriched in low complexity. Residues 345–354 (AVSSLQSSPD) are compositionally biased toward polar residues. Residues 374–388 (APAPSAPPSPSAPEP) show a composition bias toward pro residues. Ser-378 and Ser-423 each carry phosphoserine. Residues 410-425 (STTTSSSGRARAPSPG) show a composition bias toward low complexity. Phosphothreonine is present on Thr-451. Residues 465 to 484 (EKKHKASKRSRHGPGRPKGS) are compositionally biased toward basic residues. A leucine-zipper region spans residues 729 to 764 (LQKENQRLQEQILSLTAKKERLQILNVQLSVPFPAL). Disordered stretches follow at residues 775–871 (VPGP…RAPG) and 1060–1093 (QTNPFLSLSGAEGSGGGPKGGTADKGASANQEKG). Residues 787 to 796 (SSDSLSTSKS) are compositionally biased toward low complexity. Polar residues predominate over residues 804 to 813 (GLDNSLSTSS). Low complexity-rich tracts occupy residues 818 to 832 (SGCPSRSSSSLSFHS) and 839 to 853 (LLQQSPATLPLALPG).

Interacts with histone H3; interaction is necessary for MLLT6 binding to nucleosomes; interaction is inhibited by histone H3 'Lys-27' methylations (H3K27me1, H3K27me2 and H3K27me3).

It localises to the nucleus. The protein is Protein AF-17 (MLLT6) of Homo sapiens (Human).